The sequence spans 432 residues: D-amino acid dehydrogenase (432 aa).

3–17 (VLVLGSGVVGTASAY) is an FAD binding site.

It belongs to the DadA oxidoreductase family. FAD serves as cofactor.

The enzyme catalyses a D-alpha-amino acid + A + H2O = a 2-oxocarboxylate + AH2 + NH4(+). Its pathway is amino-acid degradation; D-alanine degradation; NH(3) and pyruvate from D-alanine: step 1/1. Functionally, oxidative deamination of D-amino acids. The protein is D-amino acid dehydrogenase of Stutzerimonas stutzeri (strain A1501) (Pseudomonas stutzeri).